We begin with the raw amino-acid sequence, 962 residues long: Synphilin-1 (962 aa).

3 disordered regions span residues serine 80–asparagine 99, tyrosine 104–glutamine 137, and threonine 222–glutamate 249. ANK repeat units follow at residues asparagine 348–glutamate 379, glutamate 383–glutamate 412, aspartate 418–isoleucine 447, and glutamate 455–methionine 484. Positions valine 522 to alanine 548 form a coiled coil. Residues alanine 548 to alanine 590 form a disordered region. Positions lysine 554 to serine 571 are enriched in low complexity. An ANK 5 repeat occupies valine 602–valine 631. Residues arginine 667 to serine 684 are compositionally biased toward low complexity. The disordered stretch occupies residues arginine 667 to methionine 852. Residues glutamate 685–arginine 699 are compositionally biased toward basic and acidic residues. The stretch at proline 698–glycine 728 is one ANK 6 repeat. Positions proline 772–alanine 790 are enriched in polar residues. Over residues asparagine 831–arginine 840 the composition is skewed to basic and acidic residues.

As to quaternary structure, associates with SNCA, RNF19A and PRKN. Post-translationally, ubiquitinated; mediated by SIAH1 or RNF19A and leading to its subsequent proteasomal degradation.

This is Synphilin-1 (Sncaip) from Mus musculus (Mouse).